The following is a 359-amino-acid chain: Nicotinate-nucleotide--dimethylbenzimidazole phosphoribosyltransferase (359 aa).

Catalysis depends on glutamate 318, which acts as the Proton acceptor.

It belongs to the CobT family. In terms of assembly, homodimer.

It catalyses the reaction 5,6-dimethylbenzimidazole + nicotinate beta-D-ribonucleotide = alpha-ribazole 5'-phosphate + nicotinate + H(+). Its pathway is nucleoside biosynthesis; alpha-ribazole biosynthesis; alpha-ribazole from 5,6-dimethylbenzimidazole: step 1/2. Catalyzes the synthesis of alpha-ribazole-5'-phosphate from nicotinate mononucleotide (NAMN) and 5,6-dimethylbenzimidazole (DMB). The polypeptide is Nicotinate-nucleotide--dimethylbenzimidazole phosphoribosyltransferase (Escherichia coli (strain ATCC 8739 / DSM 1576 / NBRC 3972 / NCIMB 8545 / WDCM 00012 / Crooks)).